A 204-amino-acid chain; its full sequence is Spermatogenesis-associated protein 46 (204 aa).

The disordered stretch occupies residues 101–120 (SSSSQENTYPREANRKSKHG).

Testis-specific.

It is found in the nucleus membrane. Plays a role in spermiogenesis and fertilization. This is Spermatogenesis-associated protein 46 (Spata46) from Mus musculus (Mouse).